The primary structure comprises 159 residues: Pathogenesis-related leaf protein 6 (159 aa).

An N-terminal signal peptide occupies residues 1–24 (MGLFNISLLLTCLMVLAIFHSCEA). Residue Q25 is modified to Pyrrolidone carboxylic acid. Residues 32 to 147 (LAVHNDARAQ…NGWWFISCNY (116 aa)) enclose the SCP domain. 3 disulfides stabilise this stretch: C68-C136, C109-C115, and C131-C145.

It belongs to the CRISP family.

Probably involved in the defense reaction of plants against pathogens. Has antifungal activity. In Solanum lycopersicum (Tomato), this protein is Pathogenesis-related leaf protein 6 (PR1B1).